The primary structure comprises 325 residues: Thiamine-monophosphate kinase (325 aa).

The Mg(2+) site is built by D30, S45, T46, and D47. Residue H54 coordinates substrate. Mg(2+) contacts are provided by D75 and D122. ATP contacts are provided by residues 121–122 and R146; that span reads GD. Residue D212 participates in Mg(2+) binding. An ATP-binding site is contributed by S214. D215 lines the Mg(2+) pocket. Positions 263 and 319 each coordinate substrate.

This sequence belongs to the thiamine-monophosphate kinase family.

It carries out the reaction thiamine phosphate + ATP = thiamine diphosphate + ADP. Its pathway is cofactor biosynthesis; thiamine diphosphate biosynthesis; thiamine diphosphate from thiamine phosphate: step 1/1. Its function is as follows. Catalyzes the ATP-dependent phosphorylation of thiamine-monophosphate (TMP) to form thiamine-pyrophosphate (TPP), the active form of vitamin B1. The chain is Thiamine-monophosphate kinase from Escherichia coli O157:H7.